The primary structure comprises 607 residues: DNA mismatch repair protein MutL (607 aa).

This sequence belongs to the DNA mismatch repair MutL/HexB family.

Functionally, this protein is involved in the repair of mismatches in DNA. It is required for dam-dependent methyl-directed DNA mismatch repair. May act as a 'molecular matchmaker', a protein that promotes the formation of a stable complex between two or more DNA-binding proteins in an ATP-dependent manner without itself being part of a final effector complex. The polypeptide is DNA mismatch repair protein MutL (Anaeromyxobacter sp. (strain K)).